Reading from the N-terminus, the 749-residue chain is Patatin-like phospholipase domain-containing protein AN0408 (749 aa).

The segment covering 1–11 (MEKSAAGDNID) has biased composition (basic and acidic residues). Positions 1-21 (MEKSAAGDNIDKYSPSSIPDY) are disordered. The helical transmembrane segment at 92-112 (WPFLLFVLGWITFLSVGYALT) threads the bilayer. The PNPLA domain occupies 280-471 (LCLSGGATFA…RTDIPIKALN (192 aa)). The short motif at 311-315 (GTSGG) is the GXSXG element. Ser-313 functions as the Nucleophile in the catalytic mechanism. Catalysis depends on Asp-458, which acts as the Proton acceptor. Positions 630–659 (SIQPFPFDNGAAGADQKSNDPREERLNRNF) are disordered. A compositionally biased stretch (basic and acidic residues) spans 646 to 659 (KSNDPREERLNRNF).

It belongs to the PLPL family.

Its subcellular location is the membrane. Probable lipid hydrolase. This is Patatin-like phospholipase domain-containing protein AN0408 from Emericella nidulans (strain FGSC A4 / ATCC 38163 / CBS 112.46 / NRRL 194 / M139) (Aspergillus nidulans).